The following is a 305-amino-acid chain: Ribonucleoside-diphosphate reductase small subunit (305 aa).

Positions 64, 94, and 97 each coordinate Fe cation. The active site involves Tyr101. A helical transmembrane segment spans residues 150-170; the sequence is ILLFLLVEGIFFISSFFSIGL. Residues Glu157, Glu191, and His194 each contribute to the Fe cation site.

The protein belongs to the ribonucleoside diphosphate reductase small chain family. As to quaternary structure, heterotetramer composed of a homodimer of the large subunit (R1) and a homodimer of the small subunit (R2). Larger multisubunit protein complex are also active, composed of (R1)n(R2)n. Fe cation is required as a cofactor.

The protein localises to the host membrane. It catalyses the reaction a 2'-deoxyribonucleoside 5'-diphosphate + [thioredoxin]-disulfide + H2O = a ribonucleoside 5'-diphosphate + [thioredoxin]-dithiol. Ribonucleoside-diphosphate reductase holoenzyme provides the precursors necessary for viral DNA synthesis. Allows virus growth in non-dividing cells, as well as reactivation from latency in infected hosts. Catalyzes the biosynthesis of deoxyribonucleotides from the corresponding ribonucleotides. The protein is Ribonucleoside-diphosphate reductase small subunit of Saimiri sciureus (Common squirrel monkey).